The primary structure comprises 725 residues: MKYGNMKKWAPLILFLFSLLLLQGISLHASSPSFSVNASYLASLPYANSHVAVVYYQGSLYIIGGDSHSNQVWIYSNGTWNIGPSLPFSLVSPSAIVYNNTIYVMGGYNSTGINPYVLKLNGNSWVVVSEMPLPAYSPYIFVYNNAIYVIGGENTTSPAGLYFPPSNAIRLFYPNNDSWRIIGYMPVPTYGGGYVFNGTSLIIVSGYIGYSAYTNDILIYSPQNNNWTILNGVLPYWIHDSALAYYRGVLFIVGGYIYTAGSGGVNNAILAYYNGNLQRVGYLPVPVYSAGYVQVGNMLYLAGGIGSSLSDVSALQLITFNFPPLPPKITSYSAGNESVTLGWNPVRLSSGYEIIYWNNMGFNSSINVGNVTSYTVTGLKDGITYYFEVLAYNSIGYSSPSSIIALTPASVPNPPQLVSVKYGNDNVTLNWLPPTFSGGYLLLGYYVIVKNENSMVSSHFVNSTSLTISNLTPNVTYNVFIYAVNKLGNSSPLVLTVVPITKASVFAFITKLGNGILVNWTTSFPANITLELYNPNGNLISQIAAIKGNSSYLFRVPQGNYTLVIIASNSAGVSKYVYQVVYYLPPASPQVSLIGFGNNLYISWNNEANVITYLVYVNNSLVYEGPSNSIVTNISNGTYLVKVIGVNPAGSSSPGIAVIHYTGDYVTVVKMKVVNVTIVSKIASAVSGNGNNLSLGQSIVIILLAVMILLSIAIITRNRSNGFDW.

The N-terminal stretch at 1 to 28 (MKYGNMKKWAPLILFLFSLLLLQGISLH) is a signal peptide. Kelch repeat units follow at residues 59-100 (SLYI…VYNN), 101-145 (TIYV…VYNN), 146-199 (AIYV…FNGT), 201-248 (LIIV…YYRG), 250-297 (LFIV…QVGN), and 299-342 (LYLA…VTLG). 4 consecutive Fibronectin type-III domains span residues 323-410 (PPLP…TPAS), 411-504 (VPNP…TKAS), 505-583 (VFAF…VVYY), and 585-665 (PPAS…TGDY).

In Saccharolobus solfataricus (strain ATCC 35092 / DSM 1617 / JCM 11322 / P2) (Sulfolobus solfataricus), this protein is Kelch domain-containing protein SSO1033.